A 157-amino-acid chain; its full sequence is MKEIVLAGGCFWGVEEYMSRIEGIVETKVGYANGIKENPSYEEVCSGVTGHAEACYIKYDESIISLEELLNKFWSIIDPTVLNKQGNDRGTQYRTGIFYLDEKDLNVIIKSKYQEQKNYRKPIVTEVEPLKCFYEAEEYHQKYLKKNPGGYCHIHLD.

Cys-10 is an active-site residue.

It belongs to the MsrA Met sulfoxide reductase family.

It catalyses the reaction L-methionyl-[protein] + [thioredoxin]-disulfide + H2O = L-methionyl-(S)-S-oxide-[protein] + [thioredoxin]-dithiol. It carries out the reaction [thioredoxin]-disulfide + L-methionine + H2O = L-methionine (S)-S-oxide + [thioredoxin]-dithiol. Functionally, has an important function as a repair enzyme for proteins that have been inactivated by oxidation. Catalyzes the reversible oxidation-reduction of methionine sulfoxide in proteins to methionine. In Clostridium botulinum (strain Hall / ATCC 3502 / NCTC 13319 / Type A), this protein is Peptide methionine sulfoxide reductase MsrA.